The following is a 393-amino-acid chain: Sugar efflux transporter B (393 aa).

12 consecutive transmembrane segments (helical) span residues F13–L33, A51–L71, K82–N102, F106–M126, V152–F172, V174–L194, L219–M239, L253–G273, F283–H303, V306–G326, L344–A364, and I366–C386.

This sequence belongs to the major facilitator superfamily. Set transporter family.

Its subcellular location is the cell inner membrane. Its function is as follows. Involved in the efflux of sugars. The physiological role may be the detoxification of non-metabolizable sugar analogs. Can transport lactose and glucose. This is Sugar efflux transporter B (setB) from Escherichia coli (strain K12).